A 146-amino-acid chain; its full sequence is MSIPEITQTLLQAKKDKGLSFADLEATLGRDEVCIAALFYRQASASEEEAKLLVEALGLDSSYIKHLTEYPVKGLGPVVPTDPLIYRFYEIMQVYGFPIKEVIQEKFGDGIMSAIDFTLDVEKEADPKGDRVKITMSGKFLPYKKW.

Catalysis depends on residues R87, E90, and S113.

It belongs to the cyanase family.

It catalyses the reaction cyanate + hydrogencarbonate + 3 H(+) = NH4(+) + 2 CO2. In terms of biological role, catalyzes the reaction of cyanate with bicarbonate to produce ammonia and carbon dioxide. This is Cyanate hydratase from Nostoc sp. (strain PCC 7120 / SAG 25.82 / UTEX 2576).